The chain runs to 37 residues: Conotoxin r11e (37 aa).

4 disulfide bridges follow: cysteine 2/cysteine 16, cysteine 9/cysteine 21, cysteine 15/cysteine 26, and cysteine 20/cysteine 33. Residues glutamate 13 and glutamate 14 each carry the 4-carboxyglutamate modification. A 6'-bromotryptophan modification is found at tryptophan 34.

Expressed by the venom duct.

Its subcellular location is the secreted. In terms of biological role, causes hyperactivity, circular motion, convulsion, urination and death, when injected into 13- to 15-day-old mice. Causes gasping, backward swimming or swimming in a vertical direction and death, when intraperitoneally injected into goldfish. In Conus radiatus (Rayed cone), this protein is Conotoxin r11e.